A 173-amino-acid polypeptide reads, in one-letter code: Glucagon family neuropeptides (173 aa).

The signal sequence occupies residues 1–22 (MSSKATLALLIYGIIMHYSVYS). Positions 23–80 (SPLGLNYPNLRLENEVYDEDGNSLPALAFDSDQIAIRSPPSVADDLYTLYYPPEKGTE) are excised as a propeptide. Residue K166 is modified to Lysine amide. The propeptide occupies 170–173 (LGYL).

This sequence belongs to the glucagon family.

It localises to the secreted. In terms of biological role, primary role of GHRH is to release GH from the pituitary. Functionally, PACAP plays pivotal roles as a neurotransmitter and/or a neuromodulator. The polypeptide is Glucagon family neuropeptides (Oncorhynchus nerka (Sockeye salmon)).